A 234-amino-acid polypeptide reads, in one-letter code: Sugar fermentation stimulation protein A (234 aa).

Residues 201–220 constitute a DNA-binding region (H-T-H motif); it reads LLSEAQQRGVEILAYKAEIS.

Belongs to the SfsA family.

In terms of biological role, binds to DNA non-specifically. Could be a regulatory factor involved in maltose metabolism. In Shigella sonnei (strain Ss046), this protein is Sugar fermentation stimulation protein A.